A 317-amino-acid polypeptide reads, in one-letter code: N-acetylmuramoyl-L-alanine amidase XlyB (317 aa).

The N-terminal stretch at 1–39 (MSIPVKKNLVSEAKYALKCPNAMSAEYITIHNTANDASA) is a signal peptide. Residues 40–142 (ANEISYMIGN…QDWSGKYCPH (103 aa)) form the N-acetylmuramoyl-L-alanine amidase domain. Residues 177–221 (SEYHVKKGDTLSGIAASHGASVKTLQSINHITDPNHIKIGQVIKL) enclose the LysM domain.

Belongs to the N-acetylmuramoyl-L-alanine amidase 2 family.

The protein localises to the secreted. The catalysed reaction is Hydrolyzes the link between N-acetylmuramoyl residues and L-amino acid residues in certain cell-wall glycopeptides.. Its function is as follows. Autolysins are involved in some important biological processes such as cell separation, cell-wall turnover, competence for genetic transformation, formation of the flagella and sporulation. The polypeptide is N-acetylmuramoyl-L-alanine amidase XlyB (xlyB) (Bacillus subtilis (strain 168)).